An 885-amino-acid chain; its full sequence is Alanine--tRNA ligase (885 aa).

The Zn(2+) site is built by H564, H568, C676, and H680.

The protein belongs to the class-II aminoacyl-tRNA synthetase family. Zn(2+) is required as a cofactor.

It is found in the cytoplasm. It catalyses the reaction tRNA(Ala) + L-alanine + ATP = L-alanyl-tRNA(Ala) + AMP + diphosphate. Functionally, catalyzes the attachment of alanine to tRNA(Ala) in a two-step reaction: alanine is first activated by ATP to form Ala-AMP and then transferred to the acceptor end of tRNA(Ala). Also edits incorrectly charged Ser-tRNA(Ala) and Gly-tRNA(Ala) via its editing domain. This Brucella ovis (strain ATCC 25840 / 63/290 / NCTC 10512) protein is Alanine--tRNA ligase.